We begin with the raw amino-acid sequence, 418 residues long: Putative heat shock protein HSP 90-alpha A4 (418 aa).

4 residues coordinate ATP: Asp33, Lys52, Phe78, and Arg204. Disordered regions lie at residues 255-289 (EDLE…TSAK) and 383-418 (GLGT…RMEK). Residues 265–274 (EKKKQEEGKQ) show a composition bias toward basic and acidic residues.

The protein belongs to the heat shock protein 90 family. As to quaternary structure, homodimer.

Its subcellular location is the cytoplasm. Functionally, putative molecular chaperone that may promote the maturation, structural maintenance and proper regulation of specific target proteins. In Homo sapiens (Human), this protein is Putative heat shock protein HSP 90-alpha A4 (HSP90AA4P).